A 209-amino-acid chain; its full sequence is MTPALDTALNAADGALRTLFAKPQASRTCPTVAGQRTELSTQEKALSGALMRVNHVGEVCAQALYAAQAVTTRDPALRRHFLAASREEGDHLAWTRERLDELGARPSLLNPLWYAGAFGLGLLAGRLGDRVSLGFVVETERQVEAHLASHLERLPEGDHDSRAIVAQMKDDEARHAQDAQNAGALPMPAPVKALMQASARLMTTTAHYL.

6 residues coordinate Fe cation: Glu-58, Glu-88, His-91, Glu-140, Glu-172, and His-175.

Belongs to the COQ7 family. It depends on Fe cation as a cofactor.

The protein localises to the cell membrane. It carries out the reaction a 5-methoxy-2-methyl-3-(all-trans-polyprenyl)benzene-1,4-diol + AH2 + O2 = a 3-demethylubiquinol + A + H2O. Its pathway is cofactor biosynthesis; ubiquinone biosynthesis. Catalyzes the hydroxylation of 2-nonaprenyl-3-methyl-6-methoxy-1,4-benzoquinol during ubiquinone biosynthesis. In Polaromonas sp. (strain JS666 / ATCC BAA-500), this protein is 3-demethoxyubiquinol 3-hydroxylase.